The following is a 26-amino-acid chain: Thrombin-like enzyme LmrSP-3 (26 aa).

Belongs to the peptidase S1 family. Snake venom subfamily. Expressed by the venom gland.

Its subcellular location is the secreted. In terms of biological role, thrombin-like snake venom serine protease that cleaves alpha-chain of fibrinogen (FGA) releases only fibrinopeptide A. Shows coagulant, esterase and amidase activities. The sequence is that of Thrombin-like enzyme LmrSP-3 from Lachesis muta rhombeata (Bushmaster).